Consider the following 268-residue polypeptide: NAC domain-containing protein 41 (268 aa).

The NAC domain maps to 15 to 160 (LPPGFRFHPT…NWVLCRVFLK (146 aa)). The DNA-binding element occupies 109 to 166 (VGMKKTLVFYKGKPPNGTRTNWVLHEYRLVDSQQDSLYGQNMNWVLCRVFLKKRSNSN). The segment at 166-190 (NSKRKEDEKEEVENEKETETERERE) is disordered. Over residues 180–190 (EKETETERERE) the composition is skewed to basic and acidic residues.

Its subcellular location is the nucleus. In terms of biological role, transcription activator of the mannan synthase CSLA9. Recognizes and binds to DNA-specific sequence of CSLA9 promoter. The protein is NAC domain-containing protein 41 of Arabidopsis thaliana (Mouse-ear cress).